A 536-amino-acid chain; its full sequence is Testis-specific expressed protein 55 (536 aa).

The span at 1–11 (MEEPPQEALAE) shows a compositional bias: low complexity. Disordered stretches follow at residues 1 to 287 (MEEP…PGTS) and 328 to 348 (SNAD…QTDH). Basic and acidic residues predominate over residues 35 to 52 (QKNQAERKADNHTAHRIA). Polar residues-rich tracts occupy residues 62–85 (QAES…STPG) and 105–136 (QVNQ…QVSG). Composition is skewed to basic and acidic residues over residues 138–158 (TEER…ERRT) and 173–222 (RGSR…ERRP). The span at 226-242 (IDSGSSVPSDQSPSVQI) shows a compositional bias: low complexity. A compositionally biased stretch (polar residues) spans 243-255 (DSGSSVPSDQRPS). A compositionally biased stretch (basic and acidic residues) spans 339 to 348 (HYTESDQTDH).

Testis-specific.

Its subcellular location is the nucleus. It localises to the cell projection. It is found in the cilium. The protein localises to the flagellum. The protein is Testis-specific expressed protein 55 of Homo sapiens (Human).